The sequence spans 363 residues: Peroxidase (363 aa).

An N-terminal signal peptide occupies residues 1–20 (MKLSLLSTFAAVIIGALALP). Gln-21 carries the post-translational modification Pyrrolidone carboxylic acid. 4 disulfide bridges follow: Cys-31–Cys-43, Cys-42–Cys-312, Cys-62–Cys-148, and Cys-276–Cys-341. His-75 functions as the Proton acceptor in the catalytic mechanism. 4 residues coordinate Ca(2+): Asp-76, Gly-94, Asp-96, and Ser-98. The N-linked (GlcNAc...) (high mannose) asparagine glycan is linked to Asn-162. His-203 contributes to the heme b binding site. Residues Ser-204, Asp-221, Thr-223, Val-226, and Asp-228 each coordinate Ca(2+). An O-linked (Man...) serine glycan is attached at Ser-358.

This sequence belongs to the peroxidase family. Ligninase subfamily. Ca(2+) is required as a cofactor. Requires heme b as cofactor.

The protein localises to the secreted. It catalyses the reaction 2 a phenolic donor + H2O2 = 2 a phenolic radical donor + 2 H2O. The chain is Peroxidase (CIP1) from Coprinopsis cinerea (strain Okayama-7 / 130 / ATCC MYA-4618 / FGSC 9003) (Inky cap fungus).